We begin with the raw amino-acid sequence, 191 residues long: Molybdenum cofactor guanylyltransferase (191 aa).

Residues 13-15 (LAG), lysine 26, aspartate 72, and aspartate 102 each bind GTP. Aspartate 102 is a binding site for Mg(2+).

The protein belongs to the MobA family. In terms of assembly, monomer. It depends on Mg(2+) as a cofactor.

The protein localises to the cytoplasm. It carries out the reaction Mo-molybdopterin + GTP + H(+) = Mo-molybdopterin guanine dinucleotide + diphosphate. In terms of biological role, transfers a GMP moiety from GTP to Mo-molybdopterin (Mo-MPT) cofactor (Moco or molybdenum cofactor) to form Mo-molybdopterin guanine dinucleotide (Mo-MGD) cofactor. The protein is Molybdenum cofactor guanylyltransferase of Pseudomonas putida (Arthrobacter siderocapsulatus).